The primary structure comprises 246 residues: Large ribosomal subunit protein uL3 (246 aa).

Gln151 carries the post-translational modification N5-methylglutamine.

This sequence belongs to the universal ribosomal protein uL3 family. As to quaternary structure, part of the 50S ribosomal subunit. Forms a cluster with proteins L14 and L19. Methylated by PrmB.

Its function is as follows. One of the primary rRNA binding proteins, it binds directly near the 3'-end of the 23S rRNA, where it nucleates assembly of the 50S subunit. In Bartonella bacilliformis (strain ATCC 35685 / KC583 / Herrer 020/F12,63), this protein is Large ribosomal subunit protein uL3.